The following is a 546-amino-acid chain: Probable protein kinase UbiB (546 aa).

Residues 124-502 (DFDIKPLASA…HVRQGQSRYL (379 aa)) form the Protein kinase domain. ATP-binding positions include 130–138 (LASASIAQV) and Lys-153. Asp-288 (proton acceptor) is an active-site residue. A run of 2 helical transmembrane segments spans residues 501–521 (YLLGIGATLVLSGTFLLVSRP) and 522–542 (EWGLMPGWLMAAGLVAWFVGW).

It belongs to the ABC1 family. UbiB subfamily.

It localises to the cell inner membrane. Its pathway is cofactor biosynthesis; ubiquinone biosynthesis [regulation]. Is probably a protein kinase regulator of UbiI activity which is involved in aerobic coenzyme Q (ubiquinone) biosynthesis. This chain is Probable protein kinase UbiB, found in Escherichia fergusonii (strain ATCC 35469 / DSM 13698 / CCUG 18766 / IAM 14443 / JCM 21226 / LMG 7866 / NBRC 102419 / NCTC 12128 / CDC 0568-73).